Here is an 87-residue protein sequence, read N- to C-terminus: Phosphoribosyl-ATP pyrophosphatase (87 aa).

This sequence belongs to the PRA-PH family.

It is found in the cytoplasm. The enzyme catalyses 1-(5-phospho-beta-D-ribosyl)-ATP + H2O = 1-(5-phospho-beta-D-ribosyl)-5'-AMP + diphosphate + H(+). It functions in the pathway amino-acid biosynthesis; L-histidine biosynthesis; L-histidine from 5-phospho-alpha-D-ribose 1-diphosphate: step 2/9. The polypeptide is Phosphoribosyl-ATP pyrophosphatase (Nocardioides sp. (strain ATCC BAA-499 / JS614)).